The chain runs to 107 residues: Nucleoid-associated protein amb4104 (107 aa).

Belongs to the YbaB/EbfC family. In terms of assembly, homodimer.

The protein localises to the cytoplasm. The protein resides in the nucleoid. Functionally, binds to DNA and alters its conformation. May be involved in regulation of gene expression, nucleoid organization and DNA protection. This is Nucleoid-associated protein amb4104 from Paramagnetospirillum magneticum (strain ATCC 700264 / AMB-1) (Magnetospirillum magneticum).